Here is a 366-residue protein sequence, read N- to C-terminus: Chorismate synthase (366 aa).

2 residues coordinate NADP(+): Arg-48 and Arg-54. FMN is bound by residues 125–127 (RSS), 238–239 (NA), Gly-278, 293–297 (KPTSS), and Arg-319.

The protein belongs to the chorismate synthase family. As to quaternary structure, homotetramer. It depends on FMNH2 as a cofactor.

The enzyme catalyses 5-O-(1-carboxyvinyl)-3-phosphoshikimate = chorismate + phosphate. It participates in metabolic intermediate biosynthesis; chorismate biosynthesis; chorismate from D-erythrose 4-phosphate and phosphoenolpyruvate: step 7/7. Catalyzes the anti-1,4-elimination of the C-3 phosphate and the C-6 proR hydrogen from 5-enolpyruvylshikimate-3-phosphate (EPSP) to yield chorismate, which is the branch point compound that serves as the starting substrate for the three terminal pathways of aromatic amino acid biosynthesis. This reaction introduces a second double bond into the aromatic ring system. The chain is Chorismate synthase from Neisseria gonorrhoeae (strain ATCC 700825 / FA 1090).